Reading from the N-terminus, the 300-residue chain is Enoyl-CoA hydratase domain-containing protein 3, mitochondrial (300 aa).

A mitochondrion-targeting transit peptide spans 1 to 66 (MALVAGLRAF…RNIVLSNPRR (66 aa)). The interval 32–54 (SPGSARPAGPESEPRLTSTRQQD) is disordered. Lys-110 is modified (N6-succinyllysine).

Belongs to the enoyl-CoA hydratase/isomerase family.

The protein localises to the mitochondrion. May play a role in fatty acid biosynthesis and insulin sensitivity. The sequence is that of Enoyl-CoA hydratase domain-containing protein 3, mitochondrial from Rattus norvegicus (Rat).